The primary structure comprises 154 residues: Small ribosomal subunit protein uS9 (154 aa).

The interval 135 to 154 (KESKKYGLKKARKAPQYSKR) is disordered. The segment covering 140–154 (YGLKKARKAPQYSKR) has biased composition (basic residues).

The protein belongs to the universal ribosomal protein uS9 family.

The sequence is that of Small ribosomal subunit protein uS9 from Salinispora arenicola (strain CNS-205).